Here is a 164-residue protein sequence, read N- to C-terminus: UPF0251 protein MM_1448 (164 aa).

The span at 91 to 100 shows a compositional bias: basic and acidic residues; the sequence is GDYRMPRGDR. Positions 91–123 are disordered; it reads GDYRMPRGDRTGPAGQGPAGGGRGRGQGKGRGG. Residues 104-115 show a composition bias toward gly residues; it reads AGQGPAGGGRGR.

This sequence belongs to the UPF0251 family.

The protein is UPF0251 protein MM_1448 of Methanosarcina mazei (strain ATCC BAA-159 / DSM 3647 / Goe1 / Go1 / JCM 11833 / OCM 88) (Methanosarcina frisia).